The primary structure comprises 137 residues: Small ribosomal subunit protein uS12 (137 aa).

Disordered regions lie at residues 1-22 and 37-57; these read MPTI…SKSP and KNPS…TPKK. The segment covering 9–19 has biased composition (basic residues); the sequence is RKGRKSHKGKS. D102 carries the post-translational modification 3-methylthioaspartic acid.

Belongs to the universal ribosomal protein uS12 family. In terms of assembly, part of the 30S ribosomal subunit. Contacts proteins S8 and S17. May interact with IF1 in the 30S initiation complex.

In terms of biological role, with S4 and S5 plays an important role in translational accuracy. Functionally, interacts with and stabilizes bases of the 16S rRNA that are involved in tRNA selection in the A site and with the mRNA backbone. Located at the interface of the 30S and 50S subunits, it traverses the body of the 30S subunit contacting proteins on the other side and probably holding the rRNA structure together. The combined cluster of proteins S8, S12 and S17 appears to hold together the shoulder and platform of the 30S subunit. This is Small ribosomal subunit protein uS12 from Limosilactobacillus fermentum (strain NBRC 3956 / LMG 18251) (Lactobacillus fermentum).